Reading from the N-terminus, the 250-residue chain is Intermembrane phospholipid transport system lipoprotein MlaA (250 aa).

The signal sequence occupies residues 1-18; it reads MKTKTILTALLSAIALTG. Cysteine 19 carries N-palmitoyl cysteine lipidation. Residue cysteine 19 is the site of S-diacylglycerol cysteine attachment.

The protein belongs to the MlaA family.

It is found in the cell outer membrane. Its function is as follows. Involved in a phospholipid transport pathway that maintains lipid asymmetry in the outer membrane by retrograde trafficking of phospholipids from the outer membrane to the inner membrane. In Haemophilus influenzae (strain ATCC 51907 / DSM 11121 / KW20 / Rd), this protein is Intermembrane phospholipid transport system lipoprotein MlaA.